A 345-amino-acid polypeptide reads, in one-letter code: Galacturonate transporter (345 aa).

The first 32 residues, 1-32 (MFKIKGLRWYMIGLVTIGTVLGYLTRNAIAAA), serve as a signal peptide directing secretion. Transmembrane regions (helical) follow at residues 49 to 69 (YIIA…GYVL), 76 to 96 (VGYA…ALAN), 100 to 120 (GLAV…PAGL), 139 to 159 (FNVG…WAIM), 165 to 185 (MAFL…LYFY), 237 to 257 (FLAE…MFKA), 265 to 285 (IAMF…LGGY), and 304 to 324 (LVVT…LFTS).

This sequence belongs to the major facilitator superfamily. Phthalate permease family.

It is found in the cell inner membrane. It catalyses the reaction aldehydo-D-galacturonate(out) + H(+)(out) = aldehydo-D-galacturonate(in) + H(+)(in). Inhibited by cyanide and 2,4-dinitrophenol, but not by arsenate. In terms of biological role, transport of D-galacturonate. Cannot transport the dimer digalacturonic acid. Uptake is an active process. The polypeptide is Galacturonate transporter (Dickeya chrysanthemi (Pectobacterium chrysanthemi)).